The sequence spans 115 residues: Ribonuclease P protein component (115 aa).

It belongs to the RnpA family. As to quaternary structure, consists of a catalytic RNA component (M1 or rnpB) and a protein subunit.

It catalyses the reaction Endonucleolytic cleavage of RNA, removing 5'-extranucleotides from tRNA precursor.. In terms of biological role, RNaseP catalyzes the removal of the 5'-leader sequence from pre-tRNA to produce the mature 5'-terminus. It can also cleave other RNA substrates such as 4.5S RNA. The protein component plays an auxiliary but essential role in vivo by binding to the 5'-leader sequence and broadening the substrate specificity of the ribozyme. This chain is Ribonuclease P protein component, found in Bacillus cereus (strain B4264).